A 534-amino-acid polypeptide reads, in one-letter code: Bifunctional purine biosynthesis protein PurH (534 aa).

Residues 6 to 151 (TRLPIRRALI…KNHKDVAIVV (146 aa)) form the MGS-like domain.

The protein belongs to the PurH family.

It catalyses the reaction (6R)-10-formyltetrahydrofolate + 5-amino-1-(5-phospho-beta-D-ribosyl)imidazole-4-carboxamide = 5-formamido-1-(5-phospho-D-ribosyl)imidazole-4-carboxamide + (6S)-5,6,7,8-tetrahydrofolate. The enzyme catalyses IMP + H2O = 5-formamido-1-(5-phospho-D-ribosyl)imidazole-4-carboxamide. The protein operates within purine metabolism; IMP biosynthesis via de novo pathway; 5-formamido-1-(5-phospho-D-ribosyl)imidazole-4-carboxamide from 5-amino-1-(5-phospho-D-ribosyl)imidazole-4-carboxamide (10-formyl THF route): step 1/1. It participates in purine metabolism; IMP biosynthesis via de novo pathway; IMP from 5-formamido-1-(5-phospho-D-ribosyl)imidazole-4-carboxamide: step 1/1. The polypeptide is Bifunctional purine biosynthesis protein PurH (Pseudomonas syringae pv. tomato (strain ATCC BAA-871 / DC3000)).